Here is a 319-residue protein sequence, read N- to C-terminus: Cutinase cut1 (319 aa).

An N-terminal signal peptide occupies residues 1 to 58; that stretch reads MPPHAARPGPAQNRRGRAMAVITPRRERSSLLSRALRFTAAAATALVTAVSLAAPAHA. Tyrosine 118 serves as a coordination point for poly(ethylene terephthalate). Residue serine 188 is the Nucleophile of the active site. Methionine 189 and tryptophan 213 together coordinate poly(ethylene terephthalate). Catalysis depends on charge relay system residues aspartate 234 and histidine 266. Cysteine 299 and cysteine 317 are oxidised to a cystine.

The protein belongs to the AB hydrolase superfamily.

It localises to the secreted. It is found in the periplasm. The catalysed reaction is an acetyl ester + H2O = an aliphatic alcohol + acetate + H(+). The enzyme catalyses a butanoate ester + H2O = an aliphatic alcohol + butanoate + H(+). It catalyses the reaction pentanoate ester + H2O = pentanoate + an aliphatic alcohol + H(+). It carries out the reaction an octanoate ester + H2O = an aliphatic alcohol + octanoate + H(+). The catalysed reaction is decanoate ester + H2O = decanoate + an aliphatic alcohol + H(+). The enzyme catalyses a dodecanoate ester + H2O = an aliphatic alcohol + dodecanoate + H(+). It catalyses the reaction a tetradecanoate ester + H2O = an aliphatic alcohol + tetradecanoate + H(+). It carries out the reaction hexadecanoate ester + H2O = an aliphatic alcohol + hexadecanoate + H(+). The catalysed reaction is cutin + H2O = cutin monomers.. The enzyme catalyses (ethylene terephthalate)(n) + H2O = (ethylene terephthalate)(n-1) + 4-[(2-hydroxyethoxy)carbonyl]benzoate + H(+). Its activity is regulated as follows. Activated by magnesium ions. Activated by calcium ions. Its function is as follows. Catalyzes the hydrolysis of cutin, a polyester that forms the structure of plant cuticle. Shows esterase activity towards p-nitrophenol-linked aliphatic esters (pNP-aliphatic esters). Capable of degrading the plastic poly(ethylene terephthalate) (PET), the most abundant polyester plastic in the world. In Thermobifida fusca (Thermomonospora fusca), this protein is Cutinase cut1.